The sequence spans 304 residues: Phosphatidylserine decarboxylase proenzyme (304 aa).

Catalysis depends on charge relay system; for autoendoproteolytic cleavage activity residues Asp-90, His-147, and Ser-253. Ser-253 functions as the Schiff-base intermediate with substrate; via pyruvic acid; for decarboxylase activity in the catalytic mechanism. Residue Ser-253 is modified to Pyruvic acid (Ser); by autocatalysis.

It belongs to the phosphatidylserine decarboxylase family. PSD-B subfamily. Prokaryotic type I sub-subfamily. As to quaternary structure, heterodimer of a large membrane-associated beta subunit and a small pyruvoyl-containing alpha subunit. Pyruvate is required as a cofactor. Post-translationally, is synthesized initially as an inactive proenzyme. Formation of the active enzyme involves a self-maturation process in which the active site pyruvoyl group is generated from an internal serine residue via an autocatalytic post-translational modification. Two non-identical subunits are generated from the proenzyme in this reaction, and the pyruvate is formed at the N-terminus of the alpha chain, which is derived from the carboxyl end of the proenzyme. The autoendoproteolytic cleavage occurs by a canonical serine protease mechanism, in which the side chain hydroxyl group of the serine supplies its oxygen atom to form the C-terminus of the beta chain, while the remainder of the serine residue undergoes an oxidative deamination to produce ammonia and the pyruvoyl prosthetic group on the alpha chain. During this reaction, the Ser that is part of the protease active site of the proenzyme becomes the pyruvoyl prosthetic group, which constitutes an essential element of the active site of the mature decarboxylase.

The protein localises to the cell membrane. It carries out the reaction a 1,2-diacyl-sn-glycero-3-phospho-L-serine + H(+) = a 1,2-diacyl-sn-glycero-3-phosphoethanolamine + CO2. It participates in phospholipid metabolism; phosphatidylethanolamine biosynthesis; phosphatidylethanolamine from CDP-diacylglycerol: step 2/2. Functionally, catalyzes the formation of phosphatidylethanolamine (PtdEtn) from phosphatidylserine (PtdSer). This chain is Phosphatidylserine decarboxylase proenzyme, found in Dickeya dadantii (strain 3937) (Erwinia chrysanthemi (strain 3937)).